The primary structure comprises 229 residues: Ras-related protein RABA6b (229 aa).

20–27 is a GTP binding site; the sequence is GDSAVGKS. The Effector region signature appears at 42–50; the sequence is SKPTIGVDF. GTP-binding positions include 68 to 72, 126 to 129, and 156 to 157; these read DTAGQ, NKSD, and SA. Residues Cys226 and Cys227 are each lipidated (S-geranylgeranyl cysteine).

This sequence belongs to the small GTPase superfamily. Rab family.

Its subcellular location is the cell membrane. In terms of biological role, intracellular vesicle trafficking and protein transport. This is Ras-related protein RABA6b (RABA6B) from Arabidopsis thaliana (Mouse-ear cress).